The chain runs to 282 residues: UPF0761 membrane protein HAPS_1376 (282 aa).

6 helical membrane passes run 32-52 (LLSLVPLIMVVFSVFTLLPIF), 89-109 (MGIISIIGLVVVAVMLISSID), 124-144 (VILSFVVYLAVLIFAPIFAGA), 170-190 (LLKFIPFVLTWLLFALVYLIV), 202-222 (VGALFAGVFFTLGKQIFIWYI), and 234-254 (ALATIPIMIVWIHLSWQVVLL).

The protein belongs to the UPF0761 family.

The protein localises to the cell inner membrane. The sequence is that of UPF0761 membrane protein HAPS_1376 from Glaesserella parasuis serovar 5 (strain SH0165) (Haemophilus parasuis).